Reading from the N-terminus, the 87-residue chain is Potassium channel toxin TsTXK-beta/Cryptide TyPep-16 (87 aa).

A signal peptide spans 1 to 19 (MERKLALLLILGMVTLASC). A BetaSPN-type CS-alpha/beta domain is found at 53–87 (QFGCPAYEGYCNDHCNDIERKDGECHGFKCKCAKD). Disulfide bonds link Cys-56-Cys-77, Cys-63-Cys-82, and Cys-67-Cys-84.

Belongs to the long chain scorpion toxin family. Class 1 subfamily. As to expression, expressed by the venom gland.

It localises to the secreted. In terms of biological role, specifically blocks voltage-gated potassium channels Kv4.2/KCND2. When measured at the peak current, the blocking effect of this toxin is about 65% and shows an IC(50)=652 nM. However, when measured at a later moment of the depolarising test pulse (500 ms), a 100% block of the current is observed with an IC(50)=313 nM. This may indicate a preference of the toxin for binding the inactivated state of the channel. The inhibition is completely reversible. In vivo, intraplantar injection into rat paw induces overt nociception (licking and lifting behaviors) and decreases the mechanical nociceptive threshold (hyperalgesia). Furthermore, the hyperalgesia is prolonged when intrathecal injections are performed. Functionally, induces discomfort and anxiety in mice, as it moderately diminishes locomotion (but has no effect on rearing behavior). Does not cause hemolysis, mast cell degranulation, LDH release, and does not have antimicrobial activity. Does not cause edema and pain. Its function is as follows. Does not induce hemolytic activity, lactate dehydrogenase (LDH) release from mast cells, mast cell degranulation, and antimicrobial effects. In vivo, injection into mice causes moderate edema formation, but induces very weak or no change in nociceptive sensibility. It also reduces mice locomotion, suggesting an increase in anxiety, but causes no alteration in rearing (standing on hind limbs). This is Potassium channel toxin TsTXK-beta/Cryptide TyPep-16 from Tityus serrulatus (Brazilian scorpion).